The chain runs to 146 residues: Hemoglobin subunit beta (146 aa).

Val1 bears the N-acetylvaline mark. The 145-residue stretch at His2–His146 folds into the Globin domain. Thr12 carries the post-translational modification Phosphothreonine. Lys59 is modified (N6-acetyllysine). His63 lines the heme b pocket. Residue Lys82 is modified to N6-acetyllysine. His92 is a binding site for heme b. The residue at position 93 (Cys93) is an S-nitrosocysteine. Lys144 carries the post-translational modification N6-acetyllysine.

It belongs to the globin family. As to quaternary structure, tetramer of two alpha and two different beta chains. Two external cysteine residues at beta-16 and beta-52 cause reversible polymerization to octamers and most likely irreversible formation of higher polymers. Red blood cells.

Functionally, involved in oxygen transport from the lung to the various peripheral tissues. The polypeptide is Hemoglobin subunit beta (HBB) (Echinops telfairi (Lesser hedgehog tenrec)).